The chain runs to 253 residues: Isoprenyl transferase (253 aa).

Aspartate 30 is an active-site residue. Aspartate 30 is a binding site for Mg(2+). Residues glycine 31 to arginine 34, tryptophan 35, histidine 51, and serine 79 to glutamate 81 contribute to the substrate site. Asparagine 82 acts as the Proton acceptor in catalysis. Residues phenylalanine 83, arginine 85, arginine 202, and arginine 208–serine 210 each bind substrate. Glutamate 221 is a Mg(2+) binding site.

This sequence belongs to the UPP synthase family. In terms of assembly, homodimer. Mg(2+) serves as cofactor.

Its function is as follows. Catalyzes the condensation of isopentenyl diphosphate (IPP) with allylic pyrophosphates generating different type of terpenoids. The chain is Isoprenyl transferase from Chlamydia muridarum (strain MoPn / Nigg).